Reading from the N-terminus, the 201-residue chain is Recombination protein RecR (201 aa).

Residues 60–75 (CRSCGNVDTSDPCTIC) form a C4-type zinc finger. One can recognise a Toprim domain in the interval 83–178 (TTLVVVEDVS…TVTRLAHGVP (96 aa)).

It belongs to the RecR family.

Functionally, may play a role in DNA repair. It seems to be involved in an RecBC-independent recombinational process of DNA repair. It may act with RecF and RecO. The protein is Recombination protein RecR of Methylorubrum extorquens (strain CM4 / NCIMB 13688) (Methylobacterium extorquens).